Here is a 95-residue protein sequence, read N- to C-terminus: Putative septation protein SpoVG (95 aa).

It belongs to the SpoVG family.

Functionally, could be involved in septation. The sequence is that of Putative septation protein SpoVG from Clostridium botulinum (strain ATCC 19397 / Type A).